A 1133-amino-acid chain; its full sequence is Protein TPR3 (1133 aa).

Residues 4–36 (LSRELVFLILQFLDEEKFKETVHKLEQESGFYF) form the LisH domain. The 59-residue stretch at 34–92 (FYFNMKYFEDEVINGNWDEVERYLGGFTKVDDNRYSMKIFFEIRKQKYLEALDKHDRSK) folds into the CTLH domain. The interval 287–307 (PTTANPSMDYPSGDSDHVSKR) is disordered. 12 WD repeats span residues 348 to 388 (SQGS…RLVL), 410 to 449 (DPTVSVNRIIWSPDGTLFGVAYSRHIVQIYSYHGGDDIRQ), 455 to 496 (AHVG…KQFT), 499 to 540 (GHEA…SRVD), 543 to 586 (APGH…VKRT), 590 to 629 (FRKRSMGVVQFDTTRNRFLAAGDEFLIKIWDMDNTSLLTT), 634 to 673 (GGLPASPRVRFNKEGTLLAVSTHENGIKILANADGVRLLR), 771 to 810 (MRTSKISRLIYTNSGVAILALASNAVHLLWKWPRNDRNSS), 837 to 875 (NPEEAVHCFALSKNDSYVMSASGGKISLFNMMTFKTMTT), 878 to 918 (PPPP…VKSK), 921 to 960 (GHSKKITGLAFSNVLNVLVSSGADAQICVWSTDGWDKLKS), and 1014 to 1053 (ENSSPITHAMFSCDSQLIYASFLDATVCIFNASSLRLQCR). The interval 1099 to 1133 (ESERKWGNPPPAENGSTSALSTPPNGASSSDQPER) is disordered. Positions 1112 to 1133 (NGSTSALSTPPNGASSSDQPER) are enriched in polar residues.

As to quaternary structure, tetramer. Interacts with D53. Interacts with MODD and HDAC1. Interacts with WOX1. Interacts with MOF1. As to expression, expressed in panicles, stems, leaves, spikelets and seed endosperm.

Probable downstream regulator of strigolactones signaling. Functions in a complex with MODD and HDAC1 to down-regulate the histone acetylation level at BZIP46 target genes. BZIP46 is a positive regulator of abscisic acid (ABA) signaling and drought stress tolerance. The polypeptide is Protein TPR3 (Oryza sativa subsp. japonica (Rice)).